The sequence spans 166 residues: MAHIEKQAGELQEKLIAVNRVSKTVKGGRIFSFTALTVVGDGNGRVGFGYGKAREVPAAIQKAMEKARRNMINVALNHGTLQHPVKGAHTGSRVFMQPASEGTGIIAGGAMRAVLEVAGVHNVLAKAYGSTNPINVVRATIDGLANMKSPEMVAAKRGKSVEEILG.

The 64-residue stretch at 11–74 (LQEKLIAVNR…EKARRNMINV (64 aa)) folds into the S5 DRBM domain.

It belongs to the universal ribosomal protein uS5 family. Part of the 30S ribosomal subunit. Contacts proteins S4 and S8.

Its function is as follows. With S4 and S12 plays an important role in translational accuracy. Located at the back of the 30S subunit body where it stabilizes the conformation of the head with respect to the body. The protein is Small ribosomal subunit protein uS5 of Cronobacter sakazakii (strain ATCC BAA-894) (Enterobacter sakazakii).